The sequence spans 151 residues: Ribosome maturation factor RimP (151 aa).

It belongs to the RimP family.

It is found in the cytoplasm. Its function is as follows. Required for maturation of 30S ribosomal subunits. The sequence is that of Ribosome maturation factor RimP from Desulfotalea psychrophila (strain LSv54 / DSM 12343).